Here is a 1894-residue protein sequence, read N- to C-terminus: 1,3-beta-glucan synthase component bgs2 (1894 aa).

Disordered stretches follow at residues 1–53 and 282–310; these read MSWH…DSNK and GPKI…PETS. Residues 32–51 show a composition bias toward polar residues; that stretch reads EFNNPGEESTYPQANSWNDS. Residues 286 to 296 are compositionally biased toward basic residues; the sequence is KQAKKKQKRKS. The next 16 membrane-spanning stretches (helical) occupy residues 530-550, 566-586, 600-620, 655-675, 710-730, 731-751, 1338-1358, 1394-1414, 1476-1498, 1503-1525, 1598-1618, 1637-1657, 1673-1693, 1697-1717, 1778-1798, and 1837-1857; these read VSLG…FEWI, FLIL…VFGF, VAIV…LVPL, VSWG…YFFL, ILLG…TYLW, YILV…ISIW, IFIM…GGMY, CIIS…VQEL, LLFS…MLLF, VWIP…PFIF, FTEI…YFFI, ILIL…TFAG, FGAV…IIVF, WYLE…IIAI, DFFL…IPFI, and TMFF…LVVA.

It belongs to the glycosyltransferase 48 family. As to quaternary structure, component of the 1,3-beta-glucan synthase (GS) complex, composed of at least the alternate catalytic subunits bgs1, bgs2, bgs3, and bgs4, and a regulatory subunit chr4.

It is found in the prospore membrane. The enzyme catalyses [(1-&gt;3)-beta-D-glucosyl](n) + UDP-alpha-D-glucose = [(1-&gt;3)-beta-D-glucosyl](n+1) + UDP + H(+). In terms of biological role, alternate catalytic subunit of the 1,3-beta-glucan synthase (GS) complex. Synthesizes 1,3-beta-glucan, a major structural component of the yeast cell wall. Has a role in ascospore development where it is required for the assembly of a functional spore wall. The chain is 1,3-beta-glucan synthase component bgs2 from Schizosaccharomyces pombe (strain 972 / ATCC 24843) (Fission yeast).